The sequence spans 476 residues: tRNA(Ile)-lysidine synthase (476 aa).

30 to 35 is an ATP binding site; the sequence is SGGPDS.

Belongs to the tRNA(Ile)-lysidine synthase family.

It is found in the cytoplasm. The catalysed reaction is cytidine(34) in tRNA(Ile2) + L-lysine + ATP = lysidine(34) in tRNA(Ile2) + AMP + diphosphate + H(+). In terms of biological role, ligates lysine onto the cytidine present at position 34 of the AUA codon-specific tRNA(Ile) that contains the anticodon CAU, in an ATP-dependent manner. Cytidine is converted to lysidine, thus changing the amino acid specificity of the tRNA from methionine to isoleucine. This is tRNA(Ile)-lysidine synthase from Bacillus cereus (strain ATCC 10987 / NRS 248).